Here is a 240-residue protein sequence, read N- to C-terminus: Cysteine-rich venom protein triflin (240 aa).

The signal sequence occupies residues 1–19 (MIAFIVLPILAAVLQQSSG). The region spanning 39 to 166 (DLHNSLRRSV…KYSYFYVCQY (128 aa)) is the SCP domain. Intrachain disulfides connect C75/C153, C92/C167, C148/C164, C186/C193, C189/C198, C202/C235, C211/C229, and C220/C233. The ShKT domain maps to 202 to 235 (CTRENEFTNCDSLVQKSSCQDNYMKSKCPASCFC).

This sequence belongs to the CRISP family. Forms a stable, non-covalent complex with SSP-2. In terms of tissue distribution, expressed by the venom gland.

Its subcellular location is the secreted. In terms of biological role, blocks contraction of smooth muscle elicited by high potassium-induced depolarization. May target voltage-gated calcium channels (Cav) on smooth muscle. In Protobothrops flavoviridis (Habu), this protein is Cysteine-rich venom protein triflin.